The chain runs to 495 residues: Ribitol 5-phosphate transferase FKRP (495 aa).

The Cytoplasmic segment spans residues 1 to 6 (MRLTRC). The chain crosses the membrane as a helical span at residues 7-29 (QAALAAAITLNLLVLFYVSWLQH). The Lumenal portion of the chain corresponds to 30–495 (QPRNSRARGP…PALLSLTGSG (466 aa)). Cys-168 and Cys-191 are joined by a disulfide. Asn-172 and Asn-209 each carry an N-linked (GlcNAc...) asparagine glycan. Zn(2+) is bound by residues Cys-289, Cys-296, Cys-317, and Cys-318. Positions 289–318 (CNKETTRCFGTVVGDTPAYLYEERWTPPCC) are zinc finger loop. CDP-L-ribitol contacts are provided by residues Gly-345, Arg-352, 359-364 (WDYDVD), 437-438 (QD), and 480-482 (NPQ). Positions 360, 362, and 364 each coordinate Mg(2+).

The protein belongs to the LicD transferase family. Homodimer; disulfide-linked. Tetramer. Forms a complex composed of FKRP, FKTN/fukutin, and RXYLT1/TMEM5. Also exists as large multimeric protein complexes. May interact with the dystrophin-glycoprotein complex (DGC). The cofactor is Mg(2+). In terms of processing, N-glycosylated. Expressed in the retina (at protein level). Expressed predominantly in skeletal muscle, placenta, and heart and relatively weakly in brain, lung, liver, kidney, and pancreas.

It is found in the golgi apparatus membrane. Its subcellular location is the secreted. The protein localises to the cell membrane. The protein resides in the sarcolemma. It localises to the rough endoplasmic reticulum. It is found in the cytoplasm. The enzyme catalyses 3-O-[Rib-ol-P-3-beta-D-GalNAc-(1-&gt;3)-beta-D-GlcNAc-(1-&gt;4)-(O-6-P-alpha-D-Man)]-Thr-[protein] + CDP-L-ribitol = 3-O-[Rib-ol-P-Rib-ol-P-3-beta-D-GalNAc-(1-&gt;3)-beta-D-GlcNAc-(1-&gt;4)-(O-6-P-alpha-D-Man)]-Thr-[protein] + CMP + H(+). The protein operates within protein modification; protein glycosylation. Functionally, catalyzes the transfer of a ribitol 5-phosphate from CDP-L-ribitol to the ribitol 5-phosphate previously attached by FKTN/fukutin to the phosphorylated O-mannosyl trisaccharide (N-acetylgalactosamine-beta-3-N-acetylglucosamine-beta-4-(phosphate-6-)mannose), a carbohydrate structure present in alpha-dystroglycan (DAG1). This constitutes the second step in the formation of the ribose 5-phosphate tandem repeat which links the phosphorylated O-mannosyl trisaccharide to the ligand binding moiety composed of repeats of 3-xylosyl-alpha-1,3-glucuronic acid-beta-1. This Homo sapiens (Human) protein is Ribitol 5-phosphate transferase FKRP.